Consider the following 62-residue polypeptide: uncharacterized protein (62 aa).

The protein belongs to the asfivirus C62L family.

This is an uncharacterized protein from African swine fever virus (isolate Tick/South Africa/Pretoriuskop Pr4/1996) (ASFV).